A 77-amino-acid polypeptide reads, in one-letter code: P fimbrial regulatory protein KS71A (77 aa).

This chain is P fimbrial regulatory protein KS71A (KS71A), found in Escherichia coli.